The chain runs to 364 residues: Dual-specificity RNA methyltransferase RlmN (364 aa).

The Proton acceptor role is filled by Glu91. In terms of domain architecture, Radical SAM core spans 97 to 333 (ESDRGTLCIS…VTVRKTRGDD (237 aa)). Cys104 and Cys338 are oxidised to a cystine. [4Fe-4S] cluster contacts are provided by Cys111, Cys115, and Cys118. Residues 164–165 (GE), Ser196, 218–220 (SLH), and Asn295 each bind S-adenosyl-L-methionine. Residue Cys338 is the S-methylcysteine intermediate of the active site.

The protein belongs to the radical SAM superfamily. RlmN family. It depends on [4Fe-4S] cluster as a cofactor.

The protein localises to the cytoplasm. The catalysed reaction is adenosine(2503) in 23S rRNA + 2 reduced [2Fe-2S]-[ferredoxin] + 2 S-adenosyl-L-methionine = 2-methyladenosine(2503) in 23S rRNA + 5'-deoxyadenosine + L-methionine + 2 oxidized [2Fe-2S]-[ferredoxin] + S-adenosyl-L-homocysteine. It catalyses the reaction adenosine(37) in tRNA + 2 reduced [2Fe-2S]-[ferredoxin] + 2 S-adenosyl-L-methionine = 2-methyladenosine(37) in tRNA + 5'-deoxyadenosine + L-methionine + 2 oxidized [2Fe-2S]-[ferredoxin] + S-adenosyl-L-homocysteine. Specifically methylates position 2 of adenine 2503 in 23S rRNA and position 2 of adenine 37 in tRNAs. m2A2503 modification seems to play a crucial role in the proofreading step occurring at the peptidyl transferase center and thus would serve to optimize ribosomal fidelity. The chain is Dual-specificity RNA methyltransferase RlmN from Neisseria meningitidis serogroup C / serotype 2a (strain ATCC 700532 / DSM 15464 / FAM18).